The primary structure comprises 307 residues: Farnesol kinase, chloroplastic (307 aa).

The transit peptide at 1–65 (MATTSTTTKL…TKIRKSSLAA (65 aa)) directs the protein to the chloroplast. The next 7 membrane-spanning stretches (helical) occupy residues 77 to 97 (VCAF…WGEI), 116 to 136 (IGLV…GALF), 137 to 157 (ASLV…GVYH), 177 to 194 (GPLY…YYWK), 197 to 217 (PIAI…DIVG), 237 to 257 (IGMA…FASF), and 265 to 285 (GMIL…SLPI).

It belongs to the polyprenol kinase family.

The protein resides in the plastid. Its subcellular location is the chloroplast membrane. It carries out the reaction (2E,6E)-farnesol + CTP = (2E,6E)-farnesyl phosphate + CDP + H(+). The catalysed reaction is (2E,6E)-farnesol + ATP = (2E,6E)-farnesyl phosphate + ADP + H(+). The enzyme catalyses (2E)-geraniol + ATP = (2E)-geranyl phosphate + ADP + H(+). It catalyses the reaction (2E,6E,10E)-geranylgeraniol + ATP = (2E,6E,10E)-geranylgeranyl phosphate + ADP + H(+). Functionally, kinase involved in negative regulation of abscisic acid (ABA) signaling. Substrate preference is farnesol &gt; geraniol &gt; geranylgeraniol, but has no activity with farnesyl phosphate. Can use CTP &gt; ATP &gt; GTP = UTP as phosphoryl donor. This chain is Farnesol kinase, chloroplastic, found in Arabidopsis thaliana (Mouse-ear cress).